The primary structure comprises 640 residues: MVSNPVHGLPFLPGTSFKDSTKTAFHRSQTLSYRNGYAIVRRPTVGIGGDRLQFNQLSQAELDELASKAPVLTYGQPKQAPPADFIPAHVAFDKKVLKFDAYFQEDVPMSTEEQYRIRQVNIYYYLEDDSMSVIEPVVENSGILQGKLIKRQRLAKNDRGDHYHWKDLNRGINITIYGKTFRVVDCDQFTQVFLESQGIELNPPEKMALDPYTELRKQPLRKYVTPSDFDQLKQFLTFDKQVLRFYAIWDDTDSMYGECRTYIIHYYLMDDTVEIREVHERNDGRDPFPLLMNRQRVPKVLVENAKNFPQCVLEISDQEVLEWYTAKDFIVGKSLTILGRTFFIYDCDPFTRRYYKEKFGITDLPRIDVSKREPPPVKQELPPYNGFGLVEDSAQNCFALIPKAPKKDVIKMLVNDNKVLRYLAVLESPIPEDKDRRFVFSYFLATDMISIFEPPVRNSGIIGGKYLGRTKVVKPYSTVDNPVYYGPSDFFIGAVIEVFGHRFIILDTDEYVLKYMESNAAQYSPEALASIQNHVRKREAPAPEAESKQTEKDPGVQELEALIDTIQKQLKDHSCKDNIREAFQIYDKEASGYVDRDMFFKICESLNVPVDDSLVKELIRMCSHGEGKINYYNFVRAFSN.

The interval 1 to 45 (MVSNPVHGLPFLPGTSFKDSTKTAFHRSQTLSYRNGYAIVRRPTV) is required for its localization in the mitotic spindle and interaction with alpha-tubulin. 3 consecutive DM10 domains span residues 93-198 (DKKV…ESQG), 239-359 (DKQV…KEKF), and 416-520 (DNKV…ESNA). Residues 535–554 (VRKREAPAPEAESKQTEKDP) form a disordered region. Basic and acidic residues predominate over residues 538–554 (REAPAPEAESKQTEKDP). The EF-hand domain occupies 574–609 (SCKDNIREAFQIYDKEASGYVDRDMFFKICESLNVP).

Microtubule inner protein component of sperm flagellar doublet microtubules. Interacts with the C-terminus of CACNA1E. Interacts with alpha-tubulin. In terms of tissue distribution, widely expressed. Not detected in lymphocytes.

The protein resides in the cytoplasm. Its subcellular location is the cytoskeleton. The protein localises to the cilium axoneme. It is found in the flagellum axoneme. It localises to the microtubule organizing center. The protein resides in the centrosome. Its subcellular location is the spindle. The protein localises to the spindle pole. Functionally, microtubule inner protein (MIP) part of the dynein-decorated doublet microtubules (DMTs) in cilia axoneme, which is required for motile cilia beating. Microtubule-associated protein which regulates cell division and neuronal migration during cortical development. Necessary for radial and tangential cell migration during brain development, possibly acting as a regulator of cell morphology and process formation during migration. May enhance calcium influx through CACNA1E and stimulate programmed cell death. In Homo sapiens (Human), this protein is EF-hand domain-containing protein 1.